Here is a 1152-residue protein sequence, read N- to C-terminus: Receptor-type guanylate cyclase gcy-8 (1152 aa).

An N-terminal signal peptide occupies residues 1-21 (MRTKKAFLLLTFNVLIYLAAC). The Extracellular portion of the chain corresponds to 22 to 506 (QETERILANN…GYRNERCDYT (485 aa)). Residues asparagine 31, asparagine 55, asparagine 385, and asparagine 465 are each glycosylated (N-linked (GlcNAc...) asparagine). A helical membrane pass occupies residues 507-527 (LIIIGAALILLFIVAAVSAFF). Over 528-1152 (AQKILEKRAL…NLKNPTGLQR (625 aa)) the chain is Cytoplasmic. Residues 567-857 (RTKMSNMNYG…RIKLNVETYL (291 aa)) enclose the Protein kinase domain. ATP-binding positions include 573–581 (MNYGSRNHA) and lysine 593. The stretch at 861–899 (GSLVDQMTRMMEQYANNLEKLVAERTGMLEEANQRADRL) forms a coiled coil. Positions 927–1057 (TVLFSDIVGF…DTVNMASRME (131 aa)) constitute a Guanylate cyclase domain. Residues aspartate 932, isoleucine 933, and aspartate 976 each coordinate Mg(2+).

The protein belongs to the adenylyl cyclase class-4/guanylyl cyclase family. In terms of tissue distribution, expressed bilaterally in AFD sensory neurons.

The protein localises to the cell membrane. Its subcellular location is the cell projection. It localises to the cilium. The catalysed reaction is GTP = 3',5'-cyclic GMP + diphosphate. With respect to regulation, inhibited by chloride with an IC(50) of 60 mM. Functionally, guanylate cyclase involved in the production of the second messenger cGMP. Regulates thermotaxis responses in AFD sensory neurons. May regulate AFD neuronal activity such as calcium responses to temperature gradients. Maintains the microvilli receptive ending morphology of the AFD thermosensory neurons by regulating cGMP levels downstream of kcc-3. cGMP levels antagonize the actin cytoskeleton regulator wsp-1. This is Receptor-type guanylate cyclase gcy-8 from Caenorhabditis elegans.